A 273-amino-acid chain; its full sequence is Manganese catalase (273 aa).

Glu-35 is a binding site for Mn(2+). 2 residues coordinate Ca(2+): Asp-57 and Asp-61. Residues Glu-66, His-69, Glu-149, and His-182 each contribute to the Mn(2+) site. Ca(2+)-binding residues include Asn-220, Ser-222, and Gly-224. The interval 254-273 (EKPELKPAPPFVHNTLPGRE) is disordered.

It belongs to the manganese catalase family. Ca(2+) serves as cofactor. Requires Mn(2+) as cofactor.

The catalysed reaction is 2 H2O2 = O2 + 2 H2O. Functionally, catalyzes the decomposition of hydrogen peroxide into water and oxygen. The sequence is that of Manganese catalase (ydbD) from Bacillus subtilis (strain 168).